Reading from the N-terminus, the 525-residue chain is Bifunctional pantoate ligase/cytidylate kinase (525 aa).

The interval 1–292 (MDNVPIIRTV…VGSARLIDNM (292 aa)) is pantoate--beta-alanine ligase. 44–51 (MGALHAGH) serves as a coordination point for ATP. H51 acts as the Proton donor in catalysis. Residue Q75 coordinates (R)-pantoate. Residue Q75 coordinates beta-alanine. ATP is bound at residue 162–165 (GQKD). Residue Q168 coordinates (R)-pantoate. Residues I191 and 199–202 (LSSR) contribute to the ATP site. The cytidylate kinase stretch occupies residues 293 to 525 (LLDARLPILA…LYQERFPDRA (233 aa)).

The protein in the N-terminal section; belongs to the pantothenate synthetase family. In the C-terminal section; belongs to the cytidylate kinase family. Type 1 subfamily.

The protein localises to the cytoplasm. It carries out the reaction (R)-pantoate + beta-alanine + ATP = (R)-pantothenate + AMP + diphosphate + H(+). The catalysed reaction is CMP + ATP = CDP + ADP. It catalyses the reaction dCMP + ATP = dCDP + ADP. It functions in the pathway cofactor biosynthesis; (R)-pantothenate biosynthesis; (R)-pantothenate from (R)-pantoate and beta-alanine: step 1/1. In terms of biological role, catalyzes the condensation of pantoate with beta-alanine in an ATP-dependent reaction via a pantoyl-adenylate intermediate. Catalyzes the transfer of a phosphate group from ATP to either CMP or dCMP to form CDP or dCDP and ADP, respectively. This is Bifunctional pantoate ligase/cytidylate kinase from Acaryochloris marina (strain MBIC 11017).